The chain runs to 180 residues: Tubulin polymerization-promoting protein homolog (180 aa).

2 stretches are compositionally biased toward basic and acidic residues: residues 136–158 (TGAHKERFDAEGKGKGKSGRADT) and 169–180 (KNKDSYDKTHGK). The interval 136–180 (TGAHKERFDAEGKGKGKSGRADTTENTGYVGAYKNKDSYDKTHGK) is disordered.

This sequence belongs to the TPPP family.

Functionally, regulator of microtubule dynamics. This Caenorhabditis elegans protein is Tubulin polymerization-promoting protein homolog.